The primary structure comprises 971 residues: Isoleucine--tRNA ligase (971 aa).

Residues 64-74 (PYANGHIHIGH) carry the 'HIGH' region motif. Glutamate 602 lines the L-isoleucyl-5'-AMP pocket. A 'KMSKS' region motif is present at residues 643–647 (KMSKS). ATP is bound at residue lysine 646.

This sequence belongs to the class-I aminoacyl-tRNA synthetase family. IleS type 1 subfamily. As to quaternary structure, monomer.

The protein resides in the cytoplasm. The enzyme catalyses tRNA(Ile) + L-isoleucine + ATP = L-isoleucyl-tRNA(Ile) + AMP + diphosphate. Its function is as follows. Catalyzes the attachment of isoleucine to tRNA(Ile). As IleRS can inadvertently accommodate and process structurally similar amino acids such as valine, to avoid such errors it has two additional distinct tRNA(Ile)-dependent editing activities. One activity is designated as 'pretransfer' editing and involves the hydrolysis of activated Val-AMP. The other activity is designated 'posttransfer' editing and involves deacylation of mischarged Val-tRNA(Ile). The chain is Isoleucine--tRNA ligase from Bartonella henselae (strain ATCC 49882 / DSM 28221 / CCUG 30454 / Houston 1) (Rochalimaea henselae).